The primary structure comprises 165 residues: Nucleotide-binding protein Ctha_0558 (165 aa).

The protein belongs to the YajQ family.

Its function is as follows. Nucleotide-binding protein. This is Nucleotide-binding protein Ctha_0558 from Chloroherpeton thalassium (strain ATCC 35110 / GB-78).